Consider the following 430-residue polypeptide: Maltoporin (430 aa).

Positions 1–23 (MNNKKTLLAVAISGMMFATSAAA) are cleaved as a signal peptide.

Belongs to the porin LamB (TC 1.B.3) family. As to quaternary structure, homotrimer formed of three 18-stranded antiparallel beta-barrels, containing three independent channels.

The protein resides in the cell outer membrane. It carries out the reaction beta-maltose(in) = beta-maltose(out). In terms of biological role, involved in the transport of maltose and maltodextrins. The chain is Maltoporin from Actinobacillus succinogenes (strain ATCC 55618 / DSM 22257 / CCUG 43843 / 130Z).